Reading from the N-terminus, the 247-residue chain is Probable transcriptional regulatory protein YPK_2146 (247 aa).

It belongs to the TACO1 family.

The protein resides in the cytoplasm. The protein is Probable transcriptional regulatory protein YPK_2146 of Yersinia pseudotuberculosis serotype O:3 (strain YPIII).